Reading from the N-terminus, the 395-residue chain is Probable hercynylcysteine sulfoxide lyase (395 aa).

Residues 1–21 (MQDEAMRRSGANSPAGDSLAD) form a disordered region. Residue K220 is modified to N6-(pyridoxal phosphate)lysine.

Belongs to the class-V pyridoxal-phosphate-dependent aminotransferase family. EgtE subfamily. Pyridoxal 5'-phosphate is required as a cofactor.

The enzyme catalyses S-(hercyn-2-yl)-L-cysteine S-oxide + AH2 + H(+) = ergothioneine + pyruvate + A + NH4(+). Its pathway is amino-acid biosynthesis; ergothioneine biosynthesis. Probably catalyzes the conversion of hercynylcysteine sulfoxide to ergothioneine. ERG is one of the major redox buffers which protects bacteria against redox stressors and antibiotics; loss of ERG or mycothiol (MSH, the other major redox buffer in this bacteria) leads to respiratory alterations and bioenergetic deficiencies that negatively impact virulence. This chain is Probable hercynylcysteine sulfoxide lyase, found in Mycobacterium tuberculosis (strain CDC 1551 / Oshkosh).